We begin with the raw amino-acid sequence, 105 residues long: Small ribosomal subunit protein uS10 (105 aa).

The protein belongs to the universal ribosomal protein uS10 family. As to quaternary structure, part of the 30S ribosomal subunit.

Functionally, involved in the binding of tRNA to the ribosomes. This is Small ribosomal subunit protein uS10 from Desulfotalea psychrophila (strain LSv54 / DSM 12343).